A 117-amino-acid polypeptide reads, in one-letter code: Non-specific lipid-transfer protein 1 (117 aa).

A signal peptide spans 1-25 (MAGLVKLSCLVLACMIVAGPIATNA). Disulfide bonds link C29–C76, C39–C53, C54–C99, and C74–C113.

It belongs to the plant LTP family.

Plant non-specific lipid-transfer proteins transfer phospholipids as well as galactolipids across membranes. May play a role in wax or cutin deposition in the cell walls of expanding epidermal cells and certain secretory tissues. In Brassica napus (Rape), this protein is Non-specific lipid-transfer protein 1 (LTP1).